We begin with the raw amino-acid sequence, 112 residues long: DNA-binding protein TSIB_0525 (112 aa).

The protein belongs to the PDCD5 family.

The polypeptide is DNA-binding protein TSIB_0525 (Thermococcus sibiricus (strain DSM 12597 / MM 739)).